The sequence spans 237 residues: Lipid A 1-diphosphate synthase (237 aa).

Over 1-5 (MIKNL) the chain is Cytoplasmic. Residues 6-26 (PQIVLLNIVGLALFLSWYIPV) form a helical membrane-spanning segment. At 27-62 (NHGFWLPIDADIFYFFNQKLVESKAFLWLVALTNNR) the chain is on the periplasmic side. The helical transmembrane segment at 63-83 (AFDGCSLLAMGMLMLSFWLKE) threads the bilayer. Topologically, residues 84–90 (NAPGRRR) are cytoplasmic. Residues 91-111 (IVIIGLVMLLTAVVLNQLGQA) traverse the membrane as a helical segment. Residues 112 to 145 (LIPVKRASPTLTFTDINRVSELLSVPTKDASRDS) lie on the Periplasmic side of the membrane. Position 167 (Lys167) is a topological domain, cytoplasmic. A helical transmembrane segment spans residues 168–188 (VAGLIALIIFVVFAFPRVMIG). At 189 to 194 (AHWFTD) the chain is on the periplasmic side. The helical transmembrane segment at 195–215 (IIVGSMTVILIGLPWVLLTPL) threads the bilayer. Topologically, residues 216-237 (SDRLITFFDKSLPGKNKHFQNK) are cytoplasmic.

The protein belongs to the LpxT phosphotransferase family.

It is found in the cell inner membrane. The catalysed reaction is di-trans,octa-cis-undecaprenyl diphosphate + alpha-Kdo-(2-&gt;4)-alpha-Kdo-(2-&gt;6)-lipid A (E. coli) = (Kdo)2-lipid A 1-diphosphate + di-trans,octa-cis-undecaprenyl phosphate. It participates in bacterial outer membrane biogenesis; lipopolysaccharide biosynthesis. With respect to regulation, inhibited by BasR. This regulation does not occur at the level of transcription, but rather following the assembly of LpxT into the inner membrane. In terms of biological role, involved in the modification of the lipid A domain of lipopolysaccharides (LPS). Transfers a phosphate group from undecaprenyl pyrophosphate (C55-PP) to lipid A to form lipid A 1-diphosphate. Contributes to the recycling of undecaprenyl phosphate (C55-P). In vitro, has low undecaprenyl-diphosphate phosphatase activity. This Escherichia coli (strain K12) protein is Lipid A 1-diphosphate synthase.